The chain runs to 322 residues: MSGEVPPNINIKEPRWDQSTFIGRASHFFTVTDPRNILLTNEQLENARKVVHDYRQGIVPAGLTENELWRAKYAYDSAFHPDTGEKMTLIGRMSAQVPMNMTITGCMMTFYRTTPAVLFWQWINQSFNAVVNYTNRSGDAPLTVNELGTAYVSATTGAVATALGLNALTKRVSPLIGRFVPFAAVAAANCINIPLMRQRELKVGIPVTDENGTRLGESTNAAKQAITQVVISRILMAAPGMAIPPFIMNTLEKKAFLKRFPWMSAPIQVTLVGFCLVFATPLCCALFPQKSSMSVTSLEDELQASIQRTHPEIRRVYFNKGL.

Ser-2 carries the N-acetylserine modification. Residues 2-102 lie on the Mitochondrial matrix side of the membrane; that stretch reads SGEVPPNINI…MSAQVPMNMT (101 aa). Residues 103–120 traverse the membrane as a helical segment; sequence ITGCMMTFYRTTPAVLFW. The Mitochondrial intermembrane segment spans residues 121–146; it reads QWINQSFNAVVNYTNRSGDAPLTVNE. A helical membrane pass occupies residues 147 to 167; that stretch reads LGTAYVSATTGAVATALGLNA. Topologically, residues 168-174 are mitochondrial matrix; that stretch reads LTKRVSP. Residues 175 to 195 traverse the membrane as a helical segment; sequence LIGRFVPFAAVAAANCINIPL. Over 196–228 the chain is Mitochondrial intermembrane; sequence MRQRELKVGIPVTDENGTRLGESTNAAKQAITQ. A helical membrane pass occupies residues 229 to 249; that stretch reads VVISRILMAAPGMAIPPFIMN. Over 250 to 266 the chain is Mitochondrial matrix; that stretch reads TLEKKAFLKRFPWMSAP. Residues 267–287 traverse the membrane as a helical segment; the sequence is IQVTLVGFCLVFATPLCCALF. The Mitochondrial intermembrane segment spans residues 288–322; that stretch reads PQKSSMSVTSLEDELQASIQRTHPEIRRVYFNKGL.

Belongs to the sideroflexin family. In terms of tissue distribution, widely expressed, with highest expression in kidney and liver.

It localises to the mitochondrion inner membrane. The catalysed reaction is L-serine(in) = L-serine(out). It catalyses the reaction L-alanine(in) = L-alanine(out). It carries out the reaction L-cysteine(in) = L-cysteine(out). In terms of biological role, amino acid transporter importing serine, an essential substrate of the mitochondrial branch of the one-carbon pathway, into mitochondria. Mitochondrial serine is then converted to glycine and formate, which exits to the cytosol where it is used to generate the charged folates that serve as one-carbon donors. May also transport other amino acids including alanine and cysteine. The protein is Sideroflexin-1 of Mus musculus (Mouse).